Reading from the N-terminus, the 277-residue chain is Shikimate dehydrogenase (NADP(+)) (277 aa).

Shikimate-binding positions include 19–21 (SKS) and Thr66. Lys70 acts as the Proton acceptor in catalysis. Asp82 contributes to the NADP(+) binding site. 2 residues coordinate shikimate: Asn91 and Asp107. NADP(+) is bound by residues 133–137 (GAGGA), 157–162 (NRTRAR), and Leu222. Tyr224 contributes to the shikimate binding site. Position 245 (Gly245) interacts with NADP(+).

It belongs to the shikimate dehydrogenase family. In terms of assembly, homodimer.

The catalysed reaction is shikimate + NADP(+) = 3-dehydroshikimate + NADPH + H(+). The protein operates within metabolic intermediate biosynthesis; chorismate biosynthesis; chorismate from D-erythrose 4-phosphate and phosphoenolpyruvate: step 4/7. Involved in the biosynthesis of the chorismate, which leads to the biosynthesis of aromatic amino acids. Catalyzes the reversible NADPH linked reduction of 3-dehydroshikimate (DHSA) to yield shikimate (SA). In Roseobacter denitrificans (strain ATCC 33942 / OCh 114) (Erythrobacter sp. (strain OCh 114)), this protein is Shikimate dehydrogenase (NADP(+)).